A 78-amino-acid polypeptide reads, in one-letter code: Large ribosomal subunit protein bL28 (78 aa).

Residues 1–29 form a disordered region; sequence MSAHCQVTGRQPSFGKSVSHSHRRTSRRW.

It belongs to the bacterial ribosomal protein bL28 family.

This chain is Large ribosomal subunit protein bL28, found in Corynebacterium efficiens (strain DSM 44549 / YS-314 / AJ 12310 / JCM 11189 / NBRC 100395).